Consider the following 256-residue polypeptide: Cell division protein ZapD (256 aa).

This sequence belongs to the ZapD family. Interacts with FtsZ.

It localises to the cytoplasm. Cell division factor that enhances FtsZ-ring assembly. Directly interacts with FtsZ and promotes bundling of FtsZ protofilaments, with a reduction in FtsZ GTPase activity. This Aromatoleum aromaticum (strain DSM 19018 / LMG 30748 / EbN1) (Azoarcus sp. (strain EbN1)) protein is Cell division protein ZapD.